The sequence spans 312 residues: Pantothenate kinase (312 aa).

97-104 (GSVAVGKS) serves as a coordination point for ATP.

Belongs to the prokaryotic pantothenate kinase family.

Its subcellular location is the cytoplasm. The enzyme catalyses (R)-pantothenate + ATP = (R)-4'-phosphopantothenate + ADP + H(+). Its pathway is cofactor biosynthesis; coenzyme A biosynthesis; CoA from (R)-pantothenate: step 1/5. The chain is Pantothenate kinase from Mycolicibacterium paratuberculosis (strain ATCC BAA-968 / K-10) (Mycobacterium paratuberculosis).